A 789-amino-acid chain; its full sequence is MLLAAMCLALLGCLQAQELKGHVSIILLGATGDLAKKYLWQGLFQLYLDEAGKGHSFSFHGAALTAPQQGQKLMDKVLESLSCPKDLVPSRCDELKGQFLQLSQYRQLKTVEDYQTLNKDIETQVQQDGLWEAGRIFYFSVPPFAYADIARNINSSCRPHPGAWLRVVFEKPFGHDHLSAQQLASELGSFFQEEEMYRVDHYLGKQAVAQILPFRDQNRKALDGLWNRHHVERVEIILKETIDAEGRASFYEEYGVIRDTLQNHLTEILTLVAMELPLNISSSAAVLQHKLWAFQALRGLQKSSAILGQYQAYSGQVRRELQKPDGFQSLTPTFAGVLVHIDNLRWEGVPFILMSGKALDERVGYVRIVFKNRAYCTQSERHWVPEQSRCLPQQIIFYIGHGELGHPAILVSRNLFKPSLPTQKWKEVQDQPGLRLFGRPLSDYYAYRPVREQDAYSTLLSHIFHCRKESFITTENLLASWVFWTPLLDSLAFEVPRPYPGGAENGQLLDFEFSGGQLTFSQQQLEVLIPDLGSVPKPSDFQVLGARYRQSPLITAWPEELISKLASDIEAAAVQAVRHFGKFHLALSGGSSPIALFQQLATGHYSFPWAHTHLWLVDERCVPLSDPDSNFQGLQAHLLQHVRVPYYNIHPMPVHLHQRLCAEEDQGAQTYASEISALVANSSFDLVLLGMGTDGHTASLFPQSPTGLDGDQLVVLTESPFRPHQRMSLSLPLINRAKKVAVLVMGRTKREITTLVSRVGHEPKKWPISGVVPLSGQLVWYMDYEAFLG.

The first 16 residues, 1 to 16, serve as a signal peptide directing secretion; sequence MLLAAMCLALLGCLQA. At Gln-17 the chain carries Pyrrolidone carboxylic acid. A hexose-6-phosphate dehydrogenase region spans residues 17-524; that stretch reads QELKGHVSII…GGQLTFSQQQ (508 aa). NADP(+) is bound by residues 29 to 36 and Tyr-146; that span reads GATGDLAK. A glycan (N-linked (GlcNAc...) asparagine) is linked at Asn-154. Lys-171 serves as a coordination point for NADP(+). D-glucose 6-phosphate-binding positions include Lys-171, 201–205, Glu-240, and Asp-259; that span reads HYLGK. Lys-205 bears the N6-succinyllysine mark. The active-site Proton acceptor is the His-264. Asn-279 carries N-linked (GlcNAc...) asparagine glycosylation. Residues Lys-357 and Arg-362 each contribute to the D-glucose 6-phosphate site. Arg-367 contributes to the NADP(+) binding site. Residue Lys-424 is modified to N6-succinyllysine. A linker region spans residues 525-538; that stretch reads LEVLIPDLGSVPKP. The interval 539–789 is 6-phosphogluconolactonase; the sequence is SDFQVLGARY…WYMDYEAFLG (251 aa). Residue Trp-615 coordinates NADP(+). Residue Asn-681 is glycosylated (N-linked (GlcNAc...) asparagine).

This sequence in the N-terminal section; belongs to the glucose-6-phosphate dehydrogenase family. The protein in the C-terminal section; belongs to the glucosamine/galactosamine-6-phosphate isomerase family. 6-phosphogluconolactonase subfamily. As to quaternary structure, homodimer. As to expression, expressed in liver (at protein level). Expressed in muscles. Expressed in adipose tissues.

Its subcellular location is the endoplasmic reticulum lumen. It carries out the reaction D-glucose 6-phosphate + NAD(+) = 6-phospho-D-glucono-1,5-lactone + NADH + H(+). The catalysed reaction is D-glucose 6-phosphate + NADP(+) = 6-phospho-D-glucono-1,5-lactone + NADPH + H(+). The enzyme catalyses 6-phospho-D-glucono-1,5-lactone + H2O = 6-phospho-D-gluconate + H(+). It catalyses the reaction 2-deoxy-D-glucose 6-phosphate + NAD(+) = 2-deoxy-6-phospho-D-glucono-1,5-lactone + NADH + H(+). It carries out the reaction 2-deoxy-D-glucose 6-phosphate + NADP(+) = 2-deoxy-6-phospho-D-glucono-1,5-lactone + NADPH + H(+). The catalysed reaction is D-galactose 6-phosphate + NADP(+) = 6-phospho-D-galactono-1,5-lactone + NADPH + H(+). The enzyme catalyses D-galactose 6-phosphate + NAD(+) = 6-phospho-D-galactono-1,5-lactone + NADH + H(+). It catalyses the reaction D-glucosamine 6-phosphate + NADP(+) = 2-amino-2-deoxy-6-phospho-D-glucono-1,5-lactone + NADPH + 2 H(+). It carries out the reaction D-glucose + NAD(+) = D-glucono-1,5-lactone + NADH + H(+). The catalysed reaction is D-glucose + NADP(+) = D-glucono-1,5-lactone + NADPH + H(+). The enzyme catalyses D-glucose 6-sulfate + NADP(+) = 6-sulfo-D-glucono-1,5-lactone + NADPH + H(+). It participates in carbohydrate degradation; pentose phosphate pathway; D-ribulose 5-phosphate from D-glucose 6-phosphate (oxidative stage). Its pathway is carbohydrate degradation; pentose phosphate pathway; D-ribulose 5-phosphate from D-glucose 6-phosphate (oxidative stage): step 2/3. Functionally, bifunctional enzyme localized in the lumen of the endoplasmic reticulum that catalyzes the first two steps of the oxidative branch of the pentose phosphate pathway/shunt, an alternative to glycolysis and a major source of reducing power and metabolic intermediates for biosynthetic processes. Has a hexose-6-phosphate dehydrogenase activity, with broad substrate specificity compared to glucose-6-phosphate 1-dehydrogenase/G6PD, and catalyzes the first step of the pentose phosphate pathway. In addition, acts as a 6-phosphogluconolactonase and catalyzes the second step of the pentose phosphate pathway. May have a dehydrogenase activity for alternative substrates including glucosamine 6-phosphate and glucose 6-sulfate. The main function of this enzyme is to provide reducing equivalents such as NADPH to maintain the adequate levels of reductive cofactors in the oxidizing environment of the endoplasmic reticulum. By producing NADPH that is needed by reductases of the lumen of the endoplasmic reticulum like corticosteroid 11-beta-dehydrogenase isozyme 1/HSD11B1, indirectly regulates their activity. The protein is GDH/6PGL endoplasmic bifunctional protein of Mus musculus (Mouse).